The primary structure comprises 839 residues: Periplasmic nitrate reductase (839 aa).

The segment at residues 1–34 is a signal peptide (tat-type signal); that stretch reads MTLTRRDFIKANAAAAAATAAAVNLPLVPSMAQA. Residues 46–102 form the 4Fe-4S Mo/W bis-MGD-type domain; sequence IKWDKAACRFCGTGCSVLVGTKGGRVVATQGDPDAPVNRGLNCIKGYFLSKIMYGED. Residues Cys-53, Cys-56, Cys-60, and Cys-88 each contribute to the [4Fe-4S] cluster site. Mo-bis(molybdopterin guanine dinucleotide) is bound by residues Lys-90, Gln-157, Asn-182, Cys-186, 219–226, 250–254, 269–271, Met-379, Gln-383, Asn-489, 515–516, Lys-538, Asp-565, and 729–738; these read WGSNMAEM, STYEH, QTD, SD, and TGRVLEHWHT. Substrate is bound at residue Phe-805. Mo-bis(molybdopterin guanine dinucleotide) contacts are provided by Asn-813 and Lys-830.

Belongs to the prokaryotic molybdopterin-containing oxidoreductase family. NasA/NapA/NarB subfamily. Component of the periplasmic nitrate reductase NapAB complex composed of NapA and NapB. It depends on [4Fe-4S] cluster as a cofactor. Requires Mo-bis(molybdopterin guanine dinucleotide) as cofactor. Predicted to be exported by the Tat system. The position of the signal peptide cleavage has not been experimentally proven.

It is found in the periplasm. The catalysed reaction is 2 Fe(II)-[cytochrome] + nitrate + 2 H(+) = 2 Fe(III)-[cytochrome] + nitrite + H2O. Catalytic subunit of the periplasmic nitrate reductase complex NapAB. Receives electrons from NapB and catalyzes the reduction of nitrate to nitrite. The polypeptide is Periplasmic nitrate reductase (Laribacter hongkongensis (strain HLHK9)).